A 336-amino-acid polypeptide reads, in one-letter code: Formimidoylglutamase (336 aa).

Mn(2+)-binding residues include H129, D160, H162, D164, D257, and D259.

Belongs to the arginase family. Mn(2+) serves as cofactor.

The catalysed reaction is N-formimidoyl-L-glutamate + H2O = formamide + L-glutamate. The protein operates within amino-acid degradation; L-histidine degradation into L-glutamate; L-glutamate from N-formimidoyl-L-glutamate (hydrolase route): step 1/1. Its function is as follows. Catalyzes the conversion of N-formimidoyl-L-glutamate to L-glutamate and formamide. The sequence is that of Formimidoylglutamase from Vibrio vulnificus (strain YJ016).